Here is a 102-residue protein sequence, read N- to C-terminus: Large ribosomal subunit protein bL21 (102 aa).

Residues 79 to 91 are compositionally biased toward basic residues; it reads RKDSKRKKGHRQP. The tract at residues 79–102 is disordered; the sequence is RKDSKRKKGHRQPYTKLTIDKINA.

This sequence belongs to the bacterial ribosomal protein bL21 family. As to quaternary structure, part of the 50S ribosomal subunit. Contacts protein L20.

Functionally, this protein binds to 23S rRNA in the presence of protein L20. The polypeptide is Large ribosomal subunit protein bL21 (Staphylococcus epidermidis (strain ATCC 35984 / DSM 28319 / BCRC 17069 / CCUG 31568 / BM 3577 / RP62A)).